A 649-amino-acid polypeptide reads, in one-letter code: Sulfate transporter 1.1 (649 aa).

The segment at 1 to 20 (MSGTINPPDGGGSGARNPPV) is disordered. The Cytoplasmic portion of the chain corresponds to 1-86 (MSGTINPPDG…AREYTLRKFR (86 aa)). A helical transmembrane segment spans residues 87–107 (GDLIAGLTIASLCIPQDIGYA). Over 108–111 (KLAN) the chain is Extracellular. A helical transmembrane segment spans residues 112-132 (VDPKYGLYSSFVPPLIYAGMG). Residues 133 to 136 (SSRD) lie on the Cytoplasmic side of the membrane. A helical membrane pass occupies residues 137–157 (IAIGPVAVVSLLVGTLCQAVI). The Extracellular portion of the chain corresponds to 158–168 (DPKKNPEDYLR). 2 consecutive transmembrane segments (helical) span residues 169–189 (LVFTATFFAGIFQAGLGFLRL) and 190–210 (GFLIDFLSHAAVVGFMGGAAI). Topologically, residues 211-248 (TIALQQLKGFLGIKTFTKKTDIVSVMHSVFKNAEHGWN) are extracellular. A helical membrane pass occupies residues 249-269 (WQTIVIGASFLTFLLVTKFIG). Topologically, residues 270 to 275 (KRNRKL) are cytoplasmic. A helical membrane pass occupies residues 276 to 296 (FWVPAIAPLISVIISTFFVFI). Topologically, residues 297–334 (FRADKQGVQIVKHIDQGINPISVHKIFFSGKYFTEGIR) are extracellular. The helical transmembrane segment at 335–355 (IGGIAGMVALTEAVAIARTFA) threads the bilayer. The Cytoplasmic segment spans residues 356–367 (AMKDYQIDGNKE). Residues 368 to 388 (MIALGTMNVVGSMTSCYIATG) traverse the membrane as a helical segment. At 389-404 (SFSRSAVNFMAGVETA) the chain is on the extracellular side. A helical transmembrane segment spans residues 405 to 425 (VSNIVMAIVVALTLEFITPLF). At 426–431 (KYTPNA) the chain is on the cytoplasmic side. The helical transmembrane segment at 432-452 (ILAAIIISAVLGLIDIDAAIL) threads the bilayer. Topologically, residues 453–465 (IWRIDKLDFLACM) are extracellular. A helical transmembrane segment spans residues 466–486 (GAFLGVIFISVEIGLLIAVVI). Topologically, residues 487–649 (SFAKILLQVT…CSTEVAEQQT (163 aa)) are cytoplasmic. An STAS domain is found at 517–640 (QYPDAAQIPG…LTVGDAVAVC (124 aa)).

It belongs to the SLC26A/SulP transporter (TC 2.A.53) family. As to quaternary structure, interacts with OASA1 through its STAS domain. As to expression, expressed in lateral root cap, root hairs, epidermal and cortical cells of roots.

The protein resides in the membrane. Functionally, high-affinity H(+)/sulfate cotransporter that mediates the uptake of the environmental sulfate by plant roots under low-sulfur conditions. Plays a central role in the regulation of sulfate assimilation. The sequence is that of Sulfate transporter 1.1 (SULTR1;1) from Arabidopsis thaliana (Mouse-ear cress).